A 307-amino-acid chain; its full sequence is Mitochondrial glycine transporter (307 aa).

Solcar repeat units follow at residues 8 to 87 (PRNS…MRSS), 115 to 199 (LTMY…SKQL), and 221 to 305 (TSTT…LVKR). 6 consecutive transmembrane segments (helical) span residues 14-39 (LIGG…TRIQ), 62-88 (GTLP…RSSL), 121-146 (LLTG…VRYE), 174-197 (GFGA…EKSK), 225-251 (VNTT…KTRM), and 280-298 (GLSM…AWGI).

This sequence belongs to the mitochondrial carrier (TC 2.A.29) family. SLC25A38 subfamily.

The protein resides in the mitochondrion inner membrane. The catalysed reaction is glycine(in) = glycine(out). Mitochondrial glycine transporter that imports glycine into the mitochondrial matrix. Plays an important role in providing glycine for the first enzymatic step in heme biosynthesis, the condensation of glycine with succinyl-CoA to produce 5-aminolevulinate (ALA) in the mitochondrial matrix. The sequence is that of Mitochondrial glycine transporter from Saccharomyces cerevisiae (strain RM11-1a) (Baker's yeast).